The following is a 2329-amino-acid chain: Genome polyprotein (2329 aa).

One can recognise a Peptidase C28 domain in the interval 29 to 182 (MEFTLHNGEK…DPSDVLVFVP (154 aa)). Catalysis depends on for leader protease activity residues C51, H148, and D163. Disordered stretches follow at residues 197–218 (QKRL…QSGN) and 238–264 (QLGD…NNTQ). G202 carries N-myristoyl glycine; by host lipidation. Composition is skewed to polar residues over residues 204–218 (GQSS…QSGN) and 238–251 (QLGD…SNEG). A compositionally biased stretch (low complexity) spans 252–264 (STDTTSTHTNNTQ). Residues 787–795 (ALLRSATYY) form an antigenic epitope region. A Cell attachment site motif is present at residues 866-868 (RGD). One can recognise an SF3 helicase domain in the interval 1186–1350 (NVHIANLCKV…DGYKINNKLD (165 aa)). 1214-1221 (GKSGQGKS) is an ATP binding site. Residues 1478 to 1498 (KENFEIVALCLTLLANIVIMI) lie within the membrane without spanning it. Basic and acidic residues-rich tracts occupy residues 1526 to 1535 (KTLDEAEKNP) and 1546 to 1558 (FRER…KTSD). The tract at residues 1526–1577 (KTLDEAEKNPLETSGASTVGFRERTLPGRKTSDDVNSEPVKSVEEQPQAEGP) is disordered. 3 positions are modified to O-(5'-phospho-RNA)-tyrosine: Y1578, Y1601, and Y1625. One can recognise a Peptidase C3 domain in the interval 1649–1845 (APPTDLQKMV…YCSCVSRSML (197 aa)). H1692 functions as the For protease 3C activity; Proton donor/acceptor in the catalytic mechanism. Catalysis depends on for protease 3C activity residues D1730 and C1809. 2 short sequence motifs (nuclear localization signal) span residues 1875 to 1883 (MRKTKLAPT) and 1876 to 1883 (RKTKLAPT). The RdRp catalytic domain maps to 2093–2211 (RNVWDVDYSA…ASDYDLDFEA (119 aa)). The For RdRp activity role is filled by D2197.

Belongs to the picornaviruses polyprotein family. Interacts with host ISG15. As to quaternary structure, interacts (via R-G-D motif) with host ITGAV/ITGB6. Interacts with host MAVS; this interaction inhibits binding of host TRAF3 to MAVS, thereby suppressing interferon-mediated responses. In terms of assembly, forms homooligomers. Homohexamer. Interacts with host VIM. Interacts with host BECN1. As to quaternary structure, interacts with host DCTN3. In terms of assembly, interacts with RNA-dependent RNA polymerase; this interaction allows 3B-1 to binds 2 polymerases and act as a primer. It also allows the recruitment of the RNA-dependent RNA polymerase to host membranes. Interacts with RNA-dependent RNA polymerase; this interaction allows 3B-2 to act as a primer. As to quaternary structure, interacts with RNA-dependent RNA polymerase; this interaction allows 3B-3 to act as a primer. In terms of assembly, interacts with 3B-1; this interaction allows 3B-1 to binds 2 polymerases and act as a primer. It also allows the recruitment of the RNA-dependent RNA polymerase to host membranes. Interacts with 3B-2; this interaction allows 3B-2 to act as a primer. Interacts with 3B-3; this interaction allows 3B-3 to act as a primer. In terms of processing, specific enzymatic cleavages in vivo by the viral proteases yield a variety of precursors and mature proteins. The polyprotein seems to be cotranslationally cleaved at the 2A/2B junction by a ribosomal skip from one codon to the next without formation of a peptide bond. This process would release the L-P1-2A peptide from the translational complex. During virion maturation, immature virions are rendered infectious following cleavage of VP0 into VP4 and VP2. This maturation seems to be an autocatalytic event triggered by the presence of RNA in the capsid and is followed by a conformational change of the particle. Post-translationally, myristoylation is required during RNA encapsidation and formation of the mature virus particle. In terms of processing, uridylylated by the polymerase and covalently linked to the 5'-end of genomic RNA. These uridylylated forms act as a nucleotide-peptide primer for the polymerase.

It is found in the host nucleus. The protein localises to the host cytoplasm. The protein resides in the virion. It localises to the host endoplasmic reticulum membrane. Its subcellular location is the host cytoplasmic vesicle membrane. The enzyme catalyses Autocatalytically cleaves itself from the polyprotein of the foot-and-mouth disease virus by hydrolysis of a Lys-|-Gly bond, but then cleaves host cell initiation factor eIF-4G at bonds -Gly-|-Arg- and -Lys-|-Arg-.. It catalyses the reaction a ribonucleoside 5'-triphosphate + H2O = a ribonucleoside 5'-diphosphate + phosphate + H(+). It carries out the reaction RNA(n) + a ribonucleoside 5'-triphosphate = RNA(n+1) + diphosphate. The catalysed reaction is Selective cleavage of Gln-|-Gly bond in the poliovirus polyprotein. In other picornavirus reactions Glu may be substituted for Gln, and Ser or Thr for Gly.. Autocatalytically cleaves itself from the polyprotein at the L/VP0 junction. Also cleaves the host translation initiation factors EIF4G1 and EIF4G3, in order to shut off the capped cellular mRNA transcription. Plays a role in counteracting host innate antiviral response using diverse mechanisms. Possesses a deubiquitinase activity acting on both 'Lys-48' and 'Lys-63'-linked polyubiquitin chains. In turn, inhibits the ubiquitination and subsequent activation of key signaling molecules of type I IFN response such as host RIGI, TBK1, TRAF3 and TRAF6. Inhibits host NF-kappa-B activity by inducing a decrease in RELA mRNA levels. Cleaves a peptide bond in the C-terminus of host ISG15, resulting in the damaging of this modifier that can no longer be attached to target proteins. Also cleaves host G3BP1 and G3BP2 in order to inhibit cytoplasmic stress granules assembly. Functionally, lies on the inner surface of the capsid shell. After binding to the host receptor, the capsid undergoes conformational changes. Capsid protein VP4 is released, capsid protein VP1 N-terminus is externalized, and together, they shape a pore in the host membrane through which the viral genome is translocated into the host cell cytoplasm. After genome has been released, the channel shrinks. Its function is as follows. Forms an icosahedral capsid of pseudo T=3 symmetry with capsid proteins VP1 and VP3. The capsid is composed of 60 copies of each capsid protein organized in the form of twelve pentamers and encloses the viral positive strand RNA genome. Upon acidifcation in the endosome, dissociates into pentamers. In terms of biological role, forms an icosahedral capsid of pseudo T=3 symmetry with capsid proteins VP0 and VP3. The capsid is composed of 60 copies of each capsid protein organized in the form of twelve pentamers and encloses the viral positive strand RNA genome. Upon acidifcation in the endosome, dissociates into pentamers. Forms an icosahedral capsid of pseudo T=3 symmetry with capsid proteins VP2 and VP3. The capsid is composed of 60 copies of each capsid protein organized in the form of twelve pentamers and encloses the viral positive strand RNA genome. Mediates cell entry by attachment to an integrin receptor, usually host ITGAV/ITGB6. In addition, targets host MAVS to suppress type I IFN pathway. Upon acidifcation in the endosome, dissociates into pentamers. Functionally, mediates self-processing of the polyprotein by a translational effect termed 'ribosome skipping'. Mechanistically, 2A-mediated cleavage occurs between the C-terminal glycine and the proline of the downstream protein 2B. In the case of foot-and-mouth disease virus, the 2A oligopeptide is post-translationally 'trimmed' from the C-terminus of the upstream protein 1D by 3C proteinase. Its function is as follows. Plays an essential role in the virus replication cycle by acting as a viroporin. Creates a pore in the host endoplasmic reticulum and as a consequence releases Ca2+ in the cytoplasm of infected cell. In turn, high levels of cytoplasmic calcium may trigger membrane trafficking and transport of viral ER-associated proteins to viroplasms, sites of viral genome replication. In terms of biological role, associates with and induces structural rearrangements of intracellular membranes. Triggers host autophagy by interacting with host BECN1 and thereby promotes viral replication. Participates in viral replication and interacts with host DHX9. Displays RNA-binding, nucleotide binding and NTPase activities. May play a role in virion morphogenesis and viral RNA encapsidation by interacting with the capsid protein VP3. Plays important roles in virus replication, virulence and host range. Cooperates with host DDX56 to inhibit IRF3 nuclear translocation and subsequent type I interferon production. Functionally, covalently linked to the 5'-end of both the positive-strand and negative-strand genomic RNAs. Acts as a genome-linked replication primer. Its function is as follows. Cysteine protease that generates mature viral proteins from the precursor polyprotein. In addition to its proteolytic activity, binds to viral RNA and thus influences viral genome replication. RNA and substrate bind cooperatively to the protease. In terms of biological role, RNA-directed RNA polymerase 3D-POL replicates genomic and antigenomic RNA by recognizing replications specific signals. Covalently attaches UMP to a tyrosine of VPg, which is used to prime RNA synthesis. The positive stranded RNA genome is first replicated at virus induced membranous vesicles, creating a dsRNA genomic replication form. This dsRNA is then used as template to synthesize positive stranded RNA genomes. ss(+)RNA genomes are either translated, replicated or encapsidated. The protein is Genome polyprotein of Foot-and-mouth disease virus serotype Asia-1 (FMDV).